Reading from the N-terminus, the 372-residue chain is MLEFSSQDCVFMQRALDLAAKGQYTTTPNPSVGCVLVKNGEIVGEGFHFKAGQPHAERVALAQAGENAKGATAYVTLEPCAHYGRTPPCALGLIEAGVVKVIAAMQDPNPQVAGKGLKMLSDAGIESTVNLLNDQAEKINKGFLKRMRQGMPFVQLKLAMSLDGRTAMASGESKWITGPDARSDVQKMRAKSSALLSTSTTVIADDPSLNVRWDEFPENLKTEYKKEWLRQPVRVILDSQHRIQPTHKLFLTHSPVWLVSSEPRDLTGFPDFCEQIIFPKENLLKELMRELGKRQINTLWVEAGANLSGSLIDAKLVDELIIYIAPKLLGDNARGLCQLPNLTKLADAPLWQLNELEQIGDDIKLTYTPKGV.

The interval 1 to 150 (MLEFSSQDCV…KGFLKRMRQG (150 aa)) is deaminase. Positions 6–128 (SQDCVFMQRA…MLSDAGIEST (123 aa)) constitute a CMP/dCMP-type deaminase domain. Residue His-55 participates in Zn(2+) binding. Glu-57 serves as the catalytic Proton donor. Residues Cys-80 and Cys-89 each contribute to the Zn(2+) site. Residues 151–372 (MPFVQLKLAM…IKLTYTPKGV (222 aa)) are reductase. Residues Ala-159 and 166 to 169 (TAMA) contribute to the NADP(+) site. A substrate-binding site is contributed by Ser-173. Trp-175 contributes to the NADP(+) binding site. Position 189 (Arg-189) interacts with substrate. NADP(+) contacts are provided by Thr-201 and Asp-205. Leu-209 and Arg-212 together coordinate substrate. Ser-239 is an NADP(+) binding site. Substrate is bound at residue Glu-302. 304-310 (GANLSGS) contributes to the NADP(+) binding site.

It in the N-terminal section; belongs to the cytidine and deoxycytidylate deaminase family. In the C-terminal section; belongs to the HTP reductase family. Zn(2+) serves as cofactor.

It carries out the reaction 2,5-diamino-6-hydroxy-4-(5-phosphoribosylamino)-pyrimidine + H2O + H(+) = 5-amino-6-(5-phospho-D-ribosylamino)uracil + NH4(+). The catalysed reaction is 5-amino-6-(5-phospho-D-ribitylamino)uracil + NADP(+) = 5-amino-6-(5-phospho-D-ribosylamino)uracil + NADPH + H(+). It functions in the pathway cofactor biosynthesis; riboflavin biosynthesis; 5-amino-6-(D-ribitylamino)uracil from GTP: step 2/4. It participates in cofactor biosynthesis; riboflavin biosynthesis; 5-amino-6-(D-ribitylamino)uracil from GTP: step 3/4. In terms of biological role, converts 2,5-diamino-6-(ribosylamino)-4(3h)-pyrimidinone 5'-phosphate into 5-amino-6-(ribosylamino)-2,4(1h,3h)-pyrimidinedione 5'-phosphate. This Haemophilus influenzae (strain ATCC 51907 / DSM 11121 / KW20 / Rd) protein is Riboflavin biosynthesis protein RibD (ribD).